A 565-amino-acid polypeptide reads, in one-letter code: Proline--tRNA ligase (565 aa).

Belongs to the class-II aminoacyl-tRNA synthetase family. ProS type 1 subfamily. In terms of assembly, homodimer.

Its subcellular location is the cytoplasm. The enzyme catalyses tRNA(Pro) + L-proline + ATP = L-prolyl-tRNA(Pro) + AMP + diphosphate. Its function is as follows. Catalyzes the attachment of proline to tRNA(Pro) in a two-step reaction: proline is first activated by ATP to form Pro-AMP and then transferred to the acceptor end of tRNA(Pro). As ProRS can inadvertently accommodate and process non-cognate amino acids such as alanine and cysteine, to avoid such errors it has two additional distinct editing activities against alanine. One activity is designated as 'pretransfer' editing and involves the tRNA(Pro)-independent hydrolysis of activated Ala-AMP. The other activity is designated 'posttransfer' editing and involves deacylation of mischarged Ala-tRNA(Pro). The misacylated Cys-tRNA(Pro) is not edited by ProRS. The protein is Proline--tRNA ligase of Lactobacillus delbrueckii subsp. bulgaricus (strain ATCC 11842 / DSM 20081 / BCRC 10696 / JCM 1002 / NBRC 13953 / NCIMB 11778 / NCTC 12712 / WDCM 00102 / Lb 14).